The sequence spans 152 residues: UPF0225 protein YchJ (152 aa).

The protein belongs to the UPF0225 family.

The chain is UPF0225 protein YchJ from Shigella flexneri serotype 5b (strain 8401).